The sequence spans 554 residues: MFS-type transporter tstD (554 aa).

Polar residues-rich tracts occupy residues 1-10 and 27-38; these read MPEPFNSTMP and QDSNQPPEMSAS. A disordered region spans residues 1 to 68; that stretch reads MPEPFNSTMP…ESENNEPYSV (68 aa). The N-linked (GlcNAc...) asparagine glycan is linked to Asn-6. The segment covering 39–48 has biased composition (basic and acidic residues); the sequence is SEKKHPENEN. Residues 76 to 96 form a helical membrane-spanning segment; the sequence is LMVLAASLAGFFSPLSASIYY. Residues Asn-107 and Asn-114 are each glycosylated (N-linked (GlcNAc...) asparagine). 5 helical membrane passes run 115-135, 142-162, 173-193, 202-222, and 231-251; these read LTVTTYLILQGLAPMVTASFS, PGYAICFIVYLAANLGLALQN, LQSAGSSGAIAIANGVVSDII, IAFASVGSILGPSLSPIIGGL, and WIFWFLLIFSGAFCVPFFLFF. Positions 281–300 are disordered; that stretch reads KEKQRQQRAENEEENANRQR. 3 helical membrane passes run 311–331, 354–374, and 413–433; these read VFVVFTNLQTVMTLCPAGVAF, IKVALIFLPMGVGGLISALST, and IALPVFCLGCVCTVLYGWLMT. Asn-437 carries N-linked (GlcNAc...) asparagine glycosylation. The next 3 membrane-spanning stretches (helical) occupy residues 442 to 462, 473 to 493, and 504 to 524; these read IILLFVMSWSFAAFYQVLNVL, MVTAVVNLLRCEIGAGMAAMI, and WSYTIIALIGVAATSPLLLTM.

This sequence belongs to the major facilitator superfamily.

It is found in the membrane. Functionally, MFS-type transporter; part of the gene cluster that mediates the biosynthesis of the antihypercholesterolemic agents phomoidrides which are dimeric anhydrides. The polypeptide is MFS-type transporter tstD (Talaromyces stipitatus (strain ATCC 10500 / CBS 375.48 / QM 6759 / NRRL 1006) (Penicillium stipitatum)).